A 219-amino-acid polypeptide reads, in one-letter code: 2-hydroxy-3-keto-5-methylthiopentenyl-1-phosphate phosphatase (219 aa).

It belongs to the HAD-like hydrolase superfamily. MtnX family.

The catalysed reaction is 2-hydroxy-5-methylsulfanyl-3-oxopent-1-enyl phosphate + H2O = 1,2-dihydroxy-5-(methylsulfanyl)pent-1-en-3-one + phosphate. Its pathway is amino-acid biosynthesis; L-methionine biosynthesis via salvage pathway; L-methionine from S-methyl-5-thio-alpha-D-ribose 1-phosphate: step 4/6. Its function is as follows. Dephosphorylates 2-hydroxy-3-keto-5-methylthiopentenyl-1-phosphate (HK-MTPenyl-1-P) yielding 1,2-dihydroxy-3-keto-5-methylthiopentene (DHK-MTPene). In Bacillus mycoides (strain KBAB4) (Bacillus weihenstephanensis), this protein is 2-hydroxy-3-keto-5-methylthiopentenyl-1-phosphate phosphatase.